Here is a 372-residue protein sequence, read N- to C-terminus: NAD(P)H-quinone oxidoreductase subunit 1 (372 aa).

8 helical membrane-spanning segments follow: residues 27-47 (LLWIPLPMLLVLVSAVIGVLV), 97-117 (VLFTVGPILVLVPVILSWLIV), 128-148 (VGIGIFLWIALSSIQPIGLLM), 166-186 (AAQSISYEIPLALAVLAIVMM), 204-224 (FLSWNIWRQPVGFIIFWICAL), 266-286 (VLSALLVSVLYLGGWGFPISI), 308-328 (SLGIVMTILKAYLLVFLAILL), and 347-367 (FLLPISLVNLLVTASLKLAFP).

This sequence belongs to the complex I subunit 1 family. In terms of assembly, NDH-1 is composed of at least 11 different subunits.

The protein localises to the cellular thylakoid membrane. The enzyme catalyses a plastoquinone + NADH + (n+1) H(+)(in) = a plastoquinol + NAD(+) + n H(+)(out). The catalysed reaction is a plastoquinone + NADPH + (n+1) H(+)(in) = a plastoquinol + NADP(+) + n H(+)(out). In terms of biological role, NDH-1 shuttles electrons from an unknown electron donor, via FMN and iron-sulfur (Fe-S) centers, to quinones in the respiratory and/or the photosynthetic chain. The immediate electron acceptor for the enzyme in this species is believed to be plastoquinone. Couples the redox reaction to proton translocation, and thus conserves the redox energy in a proton gradient. The polypeptide is NAD(P)H-quinone oxidoreductase subunit 1 (Prochlorococcus marinus (strain NATL2A)).